Here is a 374-residue protein sequence, read N- to C-terminus: MKFELTTTDGDARRGQLTFSRGTVQTPAFMPVGTYGTVKGMLPRDIVDSGAEIILGNTFHLMLRPGTEVVKAHGDLHDFIQWQGPILTDSGGFQVFSLGDMRKISEEGVKFRSPIDGSEVFLDPEKAMQVQRDLGSDIVMIFDECTPYPATVHEARVSMELSLRWAKRSKDAHGDNPSALFGIVQGGMHESLRSESLKGLTEIGFDGYAIGGLSVGEPKEDMLRILNHLKTEMPADKPRYLMGVGKPEDLVEGVCRGIDMFDCVMPTRNARNGHLFTQAGVVKIRNAKHRHDTGPLDPTCDCYTCQNFSRAYLHHLDKCGEILGAQLNTIHNLRHYQTVMSELRAAIGKGELAQYVSHFYARQGKERPAIATQS.

Aspartate 89 functions as the Proton acceptor in the catalytic mechanism. Residues aspartate 89–phenylalanine 93, aspartate 143, glutamine 185, and glycine 212 contribute to the substrate site. An RNA binding region spans residues glycine 243–aspartate 249. Aspartate 262 acts as the Nucleophile in catalysis. Positions threonine 267–arginine 271 are RNA binding; important for wobble base 34 recognition. Residues cysteine 300, cysteine 302, cysteine 305, and histidine 331 each contribute to the Zn(2+) site.

It belongs to the queuine tRNA-ribosyltransferase family. As to quaternary structure, homodimer. Within each dimer, one monomer is responsible for RNA recognition and catalysis, while the other monomer binds to the replacement base PreQ1. It depends on Zn(2+) as a cofactor.

The catalysed reaction is 7-aminomethyl-7-carbaguanine + guanosine(34) in tRNA = 7-aminomethyl-7-carbaguanosine(34) in tRNA + guanine. It functions in the pathway tRNA modification; tRNA-queuosine biosynthesis. In terms of biological role, catalyzes the base-exchange of a guanine (G) residue with the queuine precursor 7-aminomethyl-7-deazaguanine (PreQ1) at position 34 (anticodon wobble position) in tRNAs with GU(N) anticodons (tRNA-Asp, -Asn, -His and -Tyr). Catalysis occurs through a double-displacement mechanism. The nucleophile active site attacks the C1' of nucleotide 34 to detach the guanine base from the RNA, forming a covalent enzyme-RNA intermediate. The proton acceptor active site deprotonates the incoming PreQ1, allowing a nucleophilic attack on the C1' of the ribose to form the product. After dissociation, two additional enzymatic reactions on the tRNA convert PreQ1 to queuine (Q), resulting in the hypermodified nucleoside queuosine (7-(((4,5-cis-dihydroxy-2-cyclopenten-1-yl)amino)methyl)-7-deazaguanosine). The chain is Queuine tRNA-ribosyltransferase from Saccharophagus degradans (strain 2-40 / ATCC 43961 / DSM 17024).